A 493-amino-acid polypeptide reads, in one-letter code: Ribose import ATP-binding protein RbsA (493 aa).

ABC transporter domains follow at residues 3–239 (IKMK…VGRE) and 252–493 (GRVV…TGGR). 35-42 (GENGAGKS) contacts ATP.

This sequence belongs to the ABC transporter superfamily. Ribose importer (TC 3.A.1.2.1) family. In terms of assembly, the complex is composed of an ATP-binding protein (RbsA), two transmembrane proteins (RbsC) and a solute-binding protein (RbsB).

Its subcellular location is the cell membrane. It carries out the reaction D-ribose(out) + ATP + H2O = D-ribose(in) + ADP + phosphate + H(+). Part of the ABC transporter complex RbsABC involved in ribose import. Responsible for energy coupling to the transport system. The protein is Ribose import ATP-binding protein RbsA of Bacillus licheniformis (strain ATCC 14580 / DSM 13 / JCM 2505 / CCUG 7422 / NBRC 12200 / NCIMB 9375 / NCTC 10341 / NRRL NRS-1264 / Gibson 46).